Here is a 36-residue protein sequence, read N- to C-terminus: Mu/omega-theraphotoxin-Pmu1a (36 aa).

Intrachain disulfides connect Cys2/Cys16, Cys9/Cys21, and Cys15/Cys29.

It belongs to the neurotoxin 10 (Hwtx-1) family. In terms of tissue distribution, expressed by the venom gland.

It is found in the secreted. Its function is as follows. Gating-modifier toxin that targets both voltage-gated sodium and calcium channels, with described activities on human Nav1.7/SCN9A (IC(50)=5.5-7 nM), hNav1.6/SCN10A (IC(50)=9.9 nM), hNav1.4/SCN4A (IC(50)=62.9 nM), hCav3.2/CACNA1H (IC(50)=955.4 nM or 63.5% inhibition at 10 uM), hCav3.1/CACNA1G (95.1% inhibition at 10 uM), hCav3.3/CACNA1I (90.8% inhibition at 10 uM). Acts on Cav3 currents mainly by inducing a strong depolarizing shift in the current-voltage curve. This Pterinochilus murinus (Mombasa golden starburst baboon spider) protein is Mu/omega-theraphotoxin-Pmu1a.